The following is a 76-amino-acid chain: Sec-independent protein translocase protein TatA (76 aa).

A helical membrane pass occupies residues 1-21; that stretch reads MGSFSIWHWLVVLAIVVLVFG. The segment at 41–76 is disordered; it reads EGMKGAEEESTPPPPAQQVTGHSIKSEIEEKDQTKV. Residues 64–76 show a composition bias toward basic and acidic residues; sequence IKSEIEEKDQTKV.

This sequence belongs to the TatA/E family. In terms of assembly, the Tat system comprises two distinct complexes: a TatABC complex, containing multiple copies of TatA, TatB and TatC subunits, and a separate TatA complex, containing only TatA subunits. Substrates initially bind to the TatABC complex, which probably triggers association of the separate TatA complex to form the active translocon.

Its subcellular location is the cell inner membrane. In terms of biological role, part of the twin-arginine translocation (Tat) system that transports large folded proteins containing a characteristic twin-arginine motif in their signal peptide across membranes. TatA could form the protein-conducting channel of the Tat system. This Nitrosomonas europaea (strain ATCC 19718 / CIP 103999 / KCTC 2705 / NBRC 14298) protein is Sec-independent protein translocase protein TatA.